A 188-amino-acid chain; its full sequence is Elongation factor P (188 aa).

This sequence belongs to the elongation factor P family.

The protein resides in the cytoplasm. The protein operates within protein biosynthesis; polypeptide chain elongation. Functionally, involved in peptide bond synthesis. Stimulates efficient translation and peptide-bond synthesis on native or reconstituted 70S ribosomes in vitro. Probably functions indirectly by altering the affinity of the ribosome for aminoacyl-tRNA, thus increasing their reactivity as acceptors for peptidyl transferase. This chain is Elongation factor P, found in Stutzerimonas stutzeri (strain A1501) (Pseudomonas stutzeri).